A 217-amino-acid polypeptide reads, in one-letter code: tRNA (guanine-N(7)-)-methyltransferase (217 aa).

Positions 44, 69, 96, and 118 each coordinate S-adenosyl-L-methionine. Aspartate 118 is a catalytic residue. Residues lysine 122, aspartate 154, and 191–194 (TEYE) each bind substrate.

It belongs to the class I-like SAM-binding methyltransferase superfamily. TrmB family.

The enzyme catalyses guanosine(46) in tRNA + S-adenosyl-L-methionine = N(7)-methylguanosine(46) in tRNA + S-adenosyl-L-homocysteine. The protein operates within tRNA modification; N(7)-methylguanine-tRNA biosynthesis. In terms of biological role, catalyzes the formation of N(7)-methylguanine at position 46 (m7G46) in tRNA. In Bacillus cereus (strain G9842), this protein is tRNA (guanine-N(7)-)-methyltransferase.